The primary structure comprises 164 residues: Kunitz-type proteinase inhibitor BbCI (164 aa).

The protein belongs to the protease inhibitor I3 (leguminous Kunitz-type inhibitor) family.

It is found in the secreted. Functionally, inhibits T.cruzi cruzipain. The protein is Kunitz-type proteinase inhibitor BbCI of Bauhinia bauhinioides (Perlebia bauhinoides).